Reading from the N-terminus, the 248-residue chain is N-acylneuraminate-9-phosphatase (248 aa).

Residue Asp-12 participates in Mg(2+) binding. The phosphate site is built by Leu-13, Asp-14, Thr-131, Asn-132, and Lys-164. Residue Asp-14 coordinates Mg(2+). Asp-189 contributes to the Mg(2+) binding site.

The protein belongs to the HAD-like hydrolase superfamily. NANP family. Mg(2+) is required as a cofactor.

The enzyme catalyses N-acetylneuraminate 9-phosphate + H2O = N-acetylneuraminate + phosphate. The catalysed reaction is N-glycoloylneuraminate 9-phosphate + H2O = N-glycoloylneuraminate + phosphate. Its pathway is amino-sugar metabolism; N-acetylneuraminate biosynthesis. With respect to regulation, inhibited by calcium. Inhibited by vanadate, sodium orthovanadate and phosphonate. Functionally, catalyzes the dephosphorylation of N-acylneuraminate 9-phosphate (Neu5Ac-9-P) to N-acetylneuraminic acid (Neu5Ac or sialic acid). Can also use N-glycoloylneuraminate 9-phosphate as substrate. The protein is N-acylneuraminate-9-phosphatase of Homo sapiens (Human).